Reading from the N-terminus, the 471-residue chain is Putative multidrug resistance protein MdtD (471 aa).

At 1–11 (MTDLPDSTRWQ) the chain is on the periplasmic side. The chain crosses the membrane as a helical span at residues 12 to 32 (LWIVAFGFFMQSLDTTIVNTA). Topologically, residues 33–48 (LPSMAQSLGESPLHMH) are cytoplasmic. The helical transmembrane segment at 49–69 (MVIVSYVLTVAVMLPASGWLA) threads the bilayer. Residues 70 to 76 (DKVGVRN) lie on the Periplasmic side of the membrane. Residues 77-97 (IFFTAIVLFTLGSLFCALSGT) traverse the membrane as a helical segment. Topologically, residues 98 to 101 (LNEL) are cytoplasmic. The helical transmembrane segment at 102 to 124 (LLARALQGVGGAMMVPVGRLTVM) threads the bilayer. The Periplasmic portion of the chain corresponds to 125-137 (KIVPREQYMAAMT). Residues 138 to 158 (FVTLPGQVGPLLGPALGGLLV) traverse the membrane as a helical segment. Residues 159–164 (EYASWH) are Cytoplasmic-facing. A helical membrane pass occupies residues 165–185 (WIFLINIPVGIIGAIATLLLM). Residues 186 to 196 (PNYTMQTWRFD) are Periplasmic-facing. A helical transmembrane segment spans residues 197-217 (LSGFLLLAVGMAVLTLALDGS). The Cytoplasmic portion of the chain corresponds to 218–224 (KGTGLSP). A helical membrane pass occupies residues 225 to 245 (LAIAGLVAVGVVALVLYLLHA). The Periplasmic segment spans residues 246-262 (RNNNRALFSLKLFRTRT). The helical transmembrane segment at 263 to 283 (FSLGLAGSFAGRIGSGMLPFM) threads the bilayer. Over 284 to 285 (TP) the chain is Cytoplasmic. Residues 286–306 (VFLQIGLGFSPFHAGLMMIPM) traverse the membrane as a helical segment. Residues 307-341 (VLGSMGMKRIVVQVVNRFGYRRVLVATTLGLSLVT) are Periplasmic-facing. A helical transmembrane segment spans residues 342 to 362 (LLFMTTALLGWYYVLPFVLFL). The Cytoplasmic portion of the chain corresponds to 363-395 (QGMVNSTRFSSMNTLTLKDLPDNLASSGNSLLS). A helical membrane pass occupies residues 396 to 416 (MIMQLSMSIGVTIAGLLLGLF). The Periplasmic segment spans residues 417–430 (GSQHVSVDSGTTQT). Residues 431-451 (VFMYTWLSMALIIALPAFIFA) traverse the membrane as a helical segment. Over 452–471 (RVPNDTHQNVAISRRKRSAQ) the chain is Cytoplasmic.

This sequence belongs to the major facilitator superfamily. TCR/Tet family.

The protein localises to the cell inner membrane. In Shigella boydii serotype 4 (strain Sb227), this protein is Putative multidrug resistance protein MdtD.